Here is a 1040-residue protein sequence, read N- to C-terminus: MQVLPPGSTGGPSRLFILRPVATTLLMAAILLAGIIGYRFLPVAALPEVDYPTIQVVTLYPGASPDVMTSAVTAPLERQFGQMSGLKQMSSQSSGGASVVTLQFQLTLPLDVAEQEVQAAINAATNLLPSDLPNPPIYSKVNPADPPIMTLAVTSNAMPMTQVEDMVETRVAQKISQVSGVGLVTLAGGQRPAVRVKLNAQAIAALGLTSETVRTAITGANVNSAKGSLDGPERAVTLSANDQMQSADEYRRLIIAYQNGAPVRLGDVATVEQGAENSWLGAWANQAPAIVMNVQRQPGANIIATADSIRQMLPQLTESLPKSVKVTVLSDRTTNIRASVRDTQFELMLAIALVVMIIYLFLRNIPATIIPGVAVPLSLIGTFAVMVFLDFSINNLTLMALTIATGFVVDDAIVVIENISRYIEKGEKPLAAALKGAGEIGFTIISLTFSLIAVLIPLLFMGDIVGRLFREFAVTLAVAILISAVVSLTLTPMMCARMLSQQSLRKQNRFSRACERMFDRVIASYGRGLAKVLNHPWLTLSVAFATLLLSVMLWIVIPKGFFPVQDNGIIQGTLQAPQSSSYASMAQRQRQVAERILQDPAVQSLTTFVGVDGANPTLNSARLQINLKPLDARDDRVQQVISRLQTAVATIPGVALYLQPTQDLTIDTQVSRTQYQFTLQATTLDALSHWVPKLQNALQSLPQLSEVSSDWQDRGLAAWVNVDRDSASRLGISMADVDNALYNAFGQRLISTIYTQANQYRVVLEHNTASTPGLAALETIRLTSRDGGTVPLSAIARIEQRFAPLSINHLDQFPVTTFSFNVPEGYSLGDAVQAILDTEKTLALPADITTQFQGSTLAFQAALGSTVWLIVAAVVAMYIVLGVLYESFIHPITILSTLPTAGVGALLALIIAGSELDIIAIIGIILLIGIVKKNAIMMIDFALAAEREQGMSPRDAIFQACLLRFRPILMTTLAALLGALPLMLSTGVGAELRRPLGIAMVGGLLVSQVLTLFTTPVIYLLFDRLSLYVKSRFPRHKEEA.

Helical transmembrane passes span 25-45, 347-367, 369-389, 396-416, 440-460, 472-492, 537-557, 863-883, 888-908, 910-930, 968-988, and 998-1018; these read LLMAAILLAGIIGYRFLPVAA, LMLAIALVVMIIYLFLRNIPA, IIPGVAVPLSLIGTFAVMVFL, LTLMALTIATGFVVDDAIVVI, IGFTIISLTFSLIAVLIPLLF, FAVTLAVAILISAVVSLTLTP, WLTLSVAFATLLLSVMLWIVI, LGSTVWLIVAAVVAMYIVLGV, FIHPITILSTLPTAGVGALLA, IIAGSELDIIAIIGIILLIGI, ILMTTLAALLGALPLMLSTGV, and IAMVGGLLVSQVLTLFTTPVI.

This sequence belongs to the resistance-nodulation-cell division (RND) (TC 2.A.6) family. MdtB subfamily. Part of a tripartite efflux system composed of MdtA, MdtB and MdtC. MdtB forms a heteromultimer with MdtC.

Its subcellular location is the cell inner membrane. In Salmonella paratyphi B (strain ATCC BAA-1250 / SPB7), this protein is Multidrug resistance protein MdtB.